Here is a 356-residue protein sequence, read N- to C-terminus: Tyrosinase P (356 aa).

Residues M1–G19 form the signal peptide. N81 carries an N-linked (GlcNAc...) asparagine glycan. Residues H87 and H96 each coordinate Cu cation. 2 N-linked (GlcNAc...) asparagine glycosylation sites follow: N148 and N193. H203 contributes to the Cu cation binding site. The N-linked (GlcNAc...) asparagine glycan is linked to N226. H263 and H286 together coordinate Cu cation. The N-linked (GlcNAc...) asparagine glycan is linked to N309.

Belongs to the tyrosinase family. It depends on Cu(2+) as a cofactor. Post-translationally, glycosylated.

It is found in the endoplasmic reticulum lumen. The protein localises to the golgi apparatus lumen. It carries out the reaction aspulvinone E + O2 = (5Z)-3-(3,4-dihydroxyphenyl)-5-[(3,4-dihydroxyphenyl)methylidene]-5-oxo-2,5-dihydrofuran-3-olate. It catalyses the reaction aspulvinone E + O2 = (2Z)-2-[(3,4-dioxocyclohexa-1,5-dien-1-yl)methylidene]-4-(4-hydroxyphenyl)-5-oxo-2,5-dihydrofuran-3-olate + H2O. Activity is inhibited by the presence of dithiothreitol (DTT). Functionally, tyrosinase; part of the gene cluster that mediates the biosynthesis of Asp-melanin, a pigment that confers resistance against UV light and hampers phagocytosis by soil amoeba. The nonribosomal peptide synthase melA converts 4-hydroxyphenylpyruvate (4-HPPA) to aspulvinone E. The tyrosinase tyrP then performs hydroxylations of both aromatic moieties of aspulvinone E. The product of tyrP is highly unstable, and, due to the high reactivity of methides and ortho-diquinones, the polymeric Asp-melanin forms spontaneously. The protein is Tyrosinase P (tyrP) of Aspergillus terreus.